Consider the following 498-residue polypeptide: MGRAIGFDREKYIELQSEHINARRKEIGGKLYLEMGGKLFDDMHASRVLPGFTPDNKIAMLERIKDDVEILVCINAKDIERQKMRGDLGILYEDDVLRLVDVFRDRGFLVNNIVMTQLEDGNSQAEAFIERLERLGLTVARHRIIPGYPANIDLIVSEDGLGKNDYVETTRDLVVVTAPGPGSGKLATALSQVYHENLRGVPAGYAKFETFPIWNLPLDHPVNLAYEAATVDLNDANVIDHFHLSAHGESTVNYNRDVEAFPLLKSLLERLTGTVPYQSPTDMGVNMVGFCITDDEVCREASQQEIIRRYFKTLVEEARNGLDTTQSERAAVVMAKAGIKSTDRPVVLPARQKAEETQGPAAALQLHDGTIITGRTSPLLGCSAAALLNALKHLAGIDDELHLLSPESIEPIQTLKTKHLGSQNPRLHTDEVLIALSVSAAKDENARRALDALKELQGCDVHTTTILGSVDEGIFRNLGVLVTSDPVFARKSALYQKR.

Belongs to the UPF0371 family.

The sequence is that of UPF0371 protein cauri_2449 from Corynebacterium aurimucosum (strain ATCC 700975 / DSM 44827 / CIP 107346 / CN-1) (Corynebacterium nigricans).